The sequence spans 93 residues: Large ribosomal subunit protein bL27 (93 aa).

Residues 1 to 8 constitute a propeptide that is removed on maturation; it reads MIMDLQFF. A disordered region spans residues 8-29; that stretch reads FSHHKGGGSTANGRNSAGRRLG.

It belongs to the bacterial ribosomal protein bL27 family. Post-translationally, the N-terminus is cleaved by ribosomal processing cysteine protease Prp.

In Limosilactobacillus reuteri (strain DSM 20016) (Lactobacillus reuteri), this protein is Large ribosomal subunit protein bL27.